We begin with the raw amino-acid sequence, 315 residues long: Thioredoxin reductase (315 aa).

FAD is bound at residue 34–41 (EGQKVGGQ). Cys-134 and Cys-137 are joined by a disulfide. An FAD-binding site is contributed by 282 to 291 (DIRVKSLRQV).

This sequence belongs to the class-II pyridine nucleotide-disulfide oxidoreductase family. In terms of assembly, homodimer. The cofactor is FAD.

The protein localises to the cytoplasm. It catalyses the reaction [thioredoxin]-dithiol + NADP(+) = [thioredoxin]-disulfide + NADPH + H(+). In Peptoclostridium acidaminophilum (Eubacterium acidaminophilum), this protein is Thioredoxin reductase (trxB).